The chain runs to 1324 residues: MGFSEFFASALGTVARAKATLQGGFARFLSETVVTLQAASPEMRKFAYSKLWEEVDSVKELKPLTAQELVATLRKELWCAQVRAQKCTLASTSRFCTCGGIPGEATPTVIKETVHVDECPNGRNLCRHGTRCLRHGGPGSFQQEREVQVDAPKCPHCAGTGIVPASASWREIRRCWREQRKVHSLPSLPLHPDVLFEGTNAWQTRLRWLKTWRHVLGDVKPCTPEKWMQAAQIMRTCAVPSFENPIPGQFGYERLYNGEGKEEYWLQIPATDKYTDLIINWWHAKNTPGWEEPSSSLMDFKRNRMGPCLHIVEKRVRNSYVAPPWKPWGEDIDILSVMDSLSSQLEDFLDVFYDCAAQFDGELEFSLSNDRLSSVTGELGGVPISIGAPSKISNTPPKVNFAELYGNLVRHNHRKISALRPILMAHPDQDEIEDQLDHLENKQGGEIVSTPSFIKMLKEKRKEVRGKEFEEGSEGRLVRSKDLELSKKDIFLAHTLMDKFHGMSIVKKFGKSDPKLTKVCVDLTNQEEVIKYPVKELQTTSEGVLSAQTFTVLNRPQFKELNRLAEVGWKEAKSVCLNLHIRSYLPVHLPVYAFCVIMWGHSSNAEQASLSGAYVYLGDQEASVLQLPLLCGYIGNALEDMEAYKRSLVLSTCFFGTSGLSPGQNMFGITAVEFTEYLPTSYGGITHERDSWNQMLRNHQGVDKQRFISGFNVVDFVEAGKEKQLHFPDFDLQPVPKHQPIVRTFGKEKQPLLNKSRSMRVKTFTSFRAGNIPIGRQIDNTAEAINFELGRASTSNAINPRLDTSETNLRAGGEFAFIHTIDLPTAVTEGQVLAKIDIFKKIQDAKSMVCVQWMQAGYVNKNLTFISHLAPSQFCGVAIWYIFDAYGKIPSDVTTSLELEIARSLCPHVHVLRDSKTSVWTIDFHKICGQSLNFSGRGFSKPTLWVIAASTAQLPWSAQVTYRLEALAQGDEIAHGLATRSIVTYPISLEHLKDIEIMLPPRQMAIGNAGSINFPLSFAVQQKSSSGRIAYSYAAGLLSHFLGIGGTIHFKIQCTSSAFVTARLRVALWGDTITLEQLSQMPHVDCDVDVVSSLKIQSPFYATANFGDSGARFWVTPMSSPMAPETMESKLEYYIQILGIDADPPMCRQINYDQRFAWFTLLRPPDPKLSKILKLTLPSRVCNIAYKEATVTNYVNAFAIMCATTGMHAGKCILHFSWTLNKGTSFKDLQGHISFYSGMGDSTIGEHHGEFHLGGPLSSSLAVPFEFGSFAGPVTSGGTPFTSENWLRVETAHWDWLTSLTVDIQVLPGFRFYGRSAGPLTIPS.

The protein belongs to the nepoviruses RNA2 polyprotein family. In terms of processing, specific enzymatic cleavages in vivo by the P1 encoded 3C-like protease yield mature proteins. The N-terminus of the coat protein is blocked.

The protein localises to the host cell junction. The protein resides in the host plasmodesma. It localises to the host cytoplasm. Its subcellular location is the host nucleus. It is found in the virion. Its function is as follows. Implicated in RNA2 replication. Could also be required for nematode transmission of the virus. In terms of biological role, transports viral genome to neighboring plant cells directly through plasmosdesmata, without any budding. The movement protein allows efficient cell to cell propagation, by bypassing the host cell wall barrier. Acts by forming a tubular structure at the host plasmodesmata, enlarging it enough to allow free passage of virion capsids. This Apium graveolens (Celery) protein is RNA2 polyprotein.